Consider the following 59-residue polypeptide: Alpha-conotoxin CIA (59 aa).

Positions 1–16 (MFTVFLLVVLTITVVS) are cleaved as a signal peptide. A propeptide spanning residues 17–42 (FPSDRASDGRDDEAKDERSDMYKSKR) is cleaved from the precursor. 2 disulfides stabilise this stretch: Cys46–Cys51 and Cys47–Cys57. At Cys57 the chain carries Cysteine amide.

This sequence belongs to the conotoxin A superfamily. Expressed by the venom duct.

The protein localises to the secreted. Functionally, alpha-conotoxins act on postsynaptic membranes, they bind to the nicotinic acetylcholine receptors (nAChR) and thus inhibit them. This toxin blocks the rat muscle nAChRs alpha-1-beta-1-gamma-delta (CHRNA1-CHRNB1-CHRNG-CHRND) (IC(50)=5.7 nM) and the rat neuronal nAChR alpha-3-beta-2/CHRNA3-CHRNB2 (IC(50)=2060 nM). In vivo, intramuscular injection into zebrafish produces rapid flaccid paralysis. In Conus catus (Cat cone), this protein is Alpha-conotoxin CIA.